The chain runs to 169 residues: 3-hydroxyacyl-[acyl-carrier-protein] dehydratase FabZ (169 aa).

Residue His-74 is part of the active site.

Belongs to the thioester dehydratase family. FabZ subfamily.

Its subcellular location is the cytoplasm. It carries out the reaction a (3R)-hydroxyacyl-[ACP] = a (2E)-enoyl-[ACP] + H2O. In terms of biological role, involved in unsaturated fatty acids biosynthesis. Catalyzes the dehydration of short chain beta-hydroxyacyl-ACPs and long chain saturated and unsaturated beta-hydroxyacyl-ACPs. The polypeptide is 3-hydroxyacyl-[acyl-carrier-protein] dehydratase FabZ (Gluconobacter oxydans (strain 621H) (Gluconobacter suboxydans)).